The chain runs to 483 residues: Probable glycine dehydrogenase (decarboxylating) subunit 2 (483 aa).

The disordered stretch occupies residues 1–33; the sequence is MLIFEHSRKNRRNYSQAPATRPAKNNIPDHLKR. Residue Lys264 is modified to N6-(pyridoxal phosphate)lysine.

Belongs to the GcvP family. C-terminal subunit subfamily. As to quaternary structure, the glycine cleavage system is composed of four proteins: P, T, L and H. In this organism, the P 'protein' is a heterodimer of two subunits. Requires pyridoxal 5'-phosphate as cofactor.

The enzyme catalyses N(6)-[(R)-lipoyl]-L-lysyl-[glycine-cleavage complex H protein] + glycine + H(+) = N(6)-[(R)-S(8)-aminomethyldihydrolipoyl]-L-lysyl-[glycine-cleavage complex H protein] + CO2. Its function is as follows. The glycine cleavage system catalyzes the degradation of glycine. The P protein binds the alpha-amino group of glycine through its pyridoxal phosphate cofactor; CO(2) is released and the remaining methylamine moiety is then transferred to the lipoamide cofactor of the H protein. The chain is Probable glycine dehydrogenase (decarboxylating) subunit 2 from Nitrosomonas europaea (strain ATCC 19718 / CIP 103999 / KCTC 2705 / NBRC 14298).